Consider the following 1887-residue polypeptide: DNA-directed RNA polymerase II subunit RPB1 (1887 aa).

The Zn(2+) site is built by Cys67, Cys70, Cys77, His80, Cys107, Cys110, Cys150, and Cys176. The segment at 156-178 (MDLTKENQQPDPNKKPGHGGCGH) is disordered. The Mg(2+) site is built by Asp487, Asp489, and Asp491. The tract at residues 825–837 (PSEFYFHAMGGRE) is bridging helix. Lys1260 participates in a covalent cross-link: Glycyl lysine isopeptide (Lys-Gly) (interchain with G-Cter in ubiquitin). Disordered regions lie at residues 1528-1565 (TPGG…GPSM) and 1579-1887 (YSPT…ESED). 3 stretches are compositionally biased toward low complexity: residues 1529–1565 (PGGP…GPSM), 1579–1610 (YSPT…PTSP), and 1626–1650 (PQST…PTVQ). The stretch at 1579-1585 (YSPTSPN) is repeat 1. The segment at 1579-1881 (YSPTSPNYTA…SPAYSPSSPT (303 aa)) is C-terminal domain (CTD); 32 X 7 AA approximate tandem repeats of Y-[ST]-P-[STNVAPGN]-[STGMA]-[PSTR]-[SNAGCQKTLRIMH]. Residues 1586-1592 (YTASSPG) form a 2; approximate repeat. 4 repeat units span residues 1598–1604 (YSPSSPN), 1605–1611 (YSPTSPL), 1631–1637 (YSPSSSG), and 1638–1644 (YSPTSPV). Polar residues predominate over residues 1651–1664 (FQSSPSFAGSGSNI). Over residues 1665–1760 (YSPGNAYSPS…GVKYSPTSPT (96 aa)) the composition is skewed to low complexity. 17 consecutive repeat copies span residues 1671-1677 (YSPSSSN), 1678-1684 (YSPNSPS), 1685-1691 (YSPTSPS), 1692-1698 (YSPSSPS), 1699-1705 (YSPTSPC), 1706-1712 (YSPTSPS), 1713-1719 (YSPTSPN), 1720-1726 (YTPVTPS), 1727-1733 (YSPTSPN), 1740-1746 (YSPASPA), 1754-1760 (YSPTSPT), 1761-1767 (YSPPSPS), 1777-1783 (YTPGSPQ), 1784-1790 (YSPASPK), 1791-1797 (YSPTSPL), 1798-1804 (YSPSSPQ), and 1811-1817 (YSPTGST). Residues 1776-1786 (QYTPGSPQYSP) show a composition bias toward polar residues. Over residues 1788-1813 (SPKYSPTSPLYSPSSPQHSPSNQYSP) the composition is skewed to low complexity. Polar residues predominate over residues 1814–1831 (TGSTYSATSPRYSPNMSI). The stretch at 1818–1824 (YSATSPR) is one 24; approximate repeat. Repeat copies occupy residues 1825–1831 (YSPNMSI), 1832–1838 (YSPSSTK), 1839–1845 (YSPTSPT), 1846–1852 (YTPTARN), 1853–1859 (YSPTSPM), 1860–1866 (YSPTAPS), 1868–1874 (YSPTSPA), and 1875–1881 (YSPSSPT). The span at 1832-1849 (YSPSSTKYSPTSPTYTPT) shows a compositional bias: low complexity. The span at 1850–1859 (ARNYSPTSPM) shows a compositional bias: polar residues. Residues 1860–1881 (YSPTAPSHYSPTSPAYSPSSPT) are compositionally biased toward low complexity.

It belongs to the RNA polymerase beta' chain family. As to quaternary structure, component of the RNA polymerase II (Pol II) complex consisting of 12 subunits. In terms of processing, the tandem 7 residues repeats in the C-terminal domain (CTD) can be highly phosphorylated. The phosphorylation activates Pol II. Phosphorylation occurs mainly at residues 'Ser-2' and 'Ser-5' of the heptapeptide repeat. The phosphorylation state is believed to result from the balanced action of site-specific CTD kinases and phosphatase, and a 'CTD code' that specifies the position of Pol II within the transcription cycle has been proposed. Post-translationally, following transcription stress, the elongating form of RNA polymerase II (RNA pol IIo) is polyubiquitinated via 'Lys-63'-linkages on Lys-1260 at DNA damage sites without leading to degradation: ubiquitination promotes RNA pol IIo backtracking to allow access by the transcription-coupled nucleotide excision repair (TC-NER) machinery. Subsequent DEF1-dependent polyubiquitination by the elongin complex via 'Lys-48'-linkages may lead to proteasome-mediated degradation; presumably at stalled RNA pol II where TC-NER has failed, to halt global transcription and enable 'last resort' DNA repair pathways.

It localises to the nucleus. It catalyses the reaction RNA(n) + a ribonucleoside 5'-triphosphate = RNA(n+1) + diphosphate. In terms of biological role, DNA-dependent RNA polymerase catalyzes the transcription of DNA into RNA using the four ribonucleoside triphosphates as substrates. Largest and catalytic component of RNA polymerase II which synthesizes mRNA precursors and many functional non-coding RNAs. Forms the polymerase active center together with the second largest subunit. Pol II is the central component of the basal RNA polymerase II transcription machinery. It is composed of mobile elements that move relative to each other. RPB1 is part of the core element with the central large cleft, the clamp element that moves to open and close the cleft and the jaws that are thought to grab the incoming DNA template. At the start of transcription, a single-stranded DNA template strand of the promoter is positioned within the central active site cleft of Pol II. A bridging helix emanates from RPB1 and crosses the cleft near the catalytic site and is thought to promote translocation of Pol II by acting as a ratchet that moves the RNA-DNA hybrid through the active site by switching from straight to bent conformations at each step of nucleotide addition. During transcription elongation, Pol II moves on the template as the transcript elongates. Elongation is influenced by the phosphorylation status of the C-terminal domain (CTD) of Pol II largest subunit (RPB1), which serves as a platform for assembly of factors that regulate transcription initiation, elongation, termination and mRNA processing. In Drosophila melanogaster (Fruit fly), this protein is DNA-directed RNA polymerase II subunit RPB1.